The following is a 1054-amino-acid chain: DIS3-like exonuclease 1 (1054 aa).

The CSD1 domain occupies 236-309 (AGIKSGRYIQ…PKNEWKGRTV (74 aa)). A CSD2 domain is found at 365 to 431 (ILVTPWDYRI…GEIATILVEN (67 aa)). One can recognise an RNB domain in the interval 465-816 (RKDLRKSHLV…VHRLLMAAIS (352 aa)). At S989 the chain carries Phosphoserine.

Belongs to the RNR ribonuclease family. Component of the RNA exosome complex. The catalytically inactive RNA exosome core (Exo-9) complex is believed to associate with catalytic subunits EXOSC10, and DIS3 or DIS3L in cytoplasmic- and nuclear-specific RNA exosome complex forms. It depends on Mg(2+) as a cofactor.

The protein resides in the cytoplasm. It catalyses the reaction Exonucleolytic cleavage in the 3'- to 5'-direction to yield nucleoside 5'-phosphates.. In terms of biological role, catalytic component of the RNA exosome complex which has 3'-&gt;5' exoribonuclease activity and participates in a multitude of cellular RNA processing and degradation events. In the cytoplasm, the RNA exosome complex is involved in general mRNA turnover and specifically degrades inherently unstable mRNAs containing AU-rich elements (AREs) within their 3' untranslated regions, and in RNA surveillance pathways, preventing translation of aberrant mRNAs. It seems to be involved in degradation of histone mRNA. This Homo sapiens (Human) protein is DIS3-like exonuclease 1 (DIS3L).